A 281-amino-acid chain; its full sequence is MAQKTIRVGSIEIANDKPMVLFGGMNVLESRDMAMQVCEEYVRVTEKLGIPYVFKASFDKANRSSVNSYRGPGLEEGMRIFEEIKRTFNVPLITDVHEPHQAAVVAEVCDIIQLPAFLSRQTDLVVAMAKTGAVINIKKAQFLAPQEMKHILTKCEEAGNDQLILCERGSSFGYNNLVVDMLGFGVMKQFEYPILFDVTHALQMPGGRSDSAGGRRAQVLDLAKAGISQNLAGLFLEAHPDPDNAKCDGPCALRLDKLEPFLAQLKSLDELVKSFPIVETA.

It belongs to the KdsA family.

It localises to the cytoplasm. The enzyme catalyses D-arabinose 5-phosphate + phosphoenolpyruvate + H2O = 3-deoxy-alpha-D-manno-2-octulosonate-8-phosphate + phosphate. The protein operates within carbohydrate biosynthesis; 3-deoxy-D-manno-octulosonate biosynthesis; 3-deoxy-D-manno-octulosonate from D-ribulose 5-phosphate: step 2/3. Its pathway is bacterial outer membrane biogenesis; lipopolysaccharide biosynthesis. The polypeptide is 2-dehydro-3-deoxyphosphooctonate aldolase (Pseudomonas savastanoi pv. phaseolicola (strain 1448A / Race 6) (Pseudomonas syringae pv. phaseolicola (strain 1448A / Race 6))).